The chain runs to 541 residues: Neutral amino acid transporter B(0) (541 aa).

N-acetylmethionine is present on M1. The Cytoplasmic segment spans residues 1–51 (MVADPPRDSKGLAAAEPTANGGLALASIEDQGAAAGGYCGSRDQVRRCLRA). Residues 52–81 (NLLVLLTVVAVVAGVALGLGVSGAGGALAL) form a helical membrane-spanning segment. The Extracellular portion of the chain corresponds to 82-94 (GPERLSAFVFPGE). Residues 95–116 (LLLRLLRMIILPLVVCSLIGGA) form a helical membrane-spanning segment. The Cytoplasmic portion of the chain corresponds to 117-130 (ASLDPGALGRLGAW). Residues 131–153 (ALLFFLVTTLLASALGVGLALAL) form a helical membrane-spanning segment. Over 154-224 (QPGAASAAIN…GTRVKVPVGQ (71 aa)) the chain is Extracellular. N163 and N212 each carry an N-linked (GlcNAc...) asparagine glycan. Residues 225–248 (EVEGMNILGLVVFAIVFGVALRKL) form a helical membrane-spanning segment. Over 249 to 257 (GPEGELLIR) the chain is Cytoplasmic. The chain crosses the membrane as a helical span at residues 258 to 285 (FFNSFNEATMVLVSWIMWYAPVGIMFLV). At 286–306 (AGKIVEMEDVGLLFARLGKYI) the chain is on the extracellular side. The chain crosses the membrane as a helical span at residues 307–328 (LCCLLGHAIHGLLVLPLIYFLF). Residues 329–333 (TRKNP) lie on the Cytoplasmic side of the membrane. The segment at residues 334–364 (YRFLWGIVTPLATAFGTSSSSATLPLMMKCV) is an intramembrane region (discontinuously helical). At 365–373 (EENNGVAKH) the chain is on the cytoplasmic side. The chain crosses the membrane as a helical span at residues 374–400 (ISRFILPIGATVNMDGAALFQCVAAVF). The Na(+) site is built by G382, T384, and N386. Residues 401–413 (IAQLSQQSLDFVK) are Extracellular-facing. An intramembrane region (discontinuously helical) is located at residues 414–447 (IITILVTATASSVGAAGIPAGGVLTLAIILEAVN). At 448-460 (LPVDHISLILAVD) the chain is on the extracellular side. A helical membrane pass occupies residues 461-482 (WLVDRSCTVLNVEGDALGAGLL). Residues N471 and D475 each coordinate Na(+). At 483-541 (QNYVDRTESRSTEPELIQVKSELPLDPLPVPTEEGNPLLKHYRGPAGDATVASEKESVM) the chain is on the cytoplasmic side. A Phosphoserine modification is found at S493. T494 carries the post-translational modification Phosphothreonine. Phosphoserine occurs at positions 503, 535, and 539. Positions 511-541 (PVPTEEGNPLLKHYRGPAGDATVASEKESVM) are disordered.

The protein belongs to the dicarboxylate/amino acid:cation symporter (DAACS) (TC 2.A.23) family. SLC1A5 subfamily. Homotrimer. Interacts with ERVH48-1/suppressyn; may negatively regulate syncytialization. As to expression, placenta, lung, skeletal muscle, kidney, pancreas, and intestine. Expressed in CD34-positive hematopoietic progenitors (at protein level).

The protein localises to the cell membrane. It localises to the melanosome. It carries out the reaction L-glutamine(out) + L-serine(in) + Na(+)(out) = L-glutamine(in) + L-serine(out) + Na(+)(in). The catalysed reaction is L-glutamine(in) + L-serine(out) + Na(+)(out) = L-glutamine(out) + L-serine(in) + Na(+)(in). The enzyme catalyses L-threonine(in) + L-glutamine(out) + Na(+)(out) = L-threonine(out) + L-glutamine(in) + Na(+)(in). It catalyses the reaction L-threonine(out) + L-glutamine(in) + Na(+)(out) = L-threonine(in) + L-glutamine(out) + Na(+)(in). It carries out the reaction L-asparagine(in) + L-glutamine(out) + Na(+)(out) = L-asparagine(out) + L-glutamine(in) + Na(+)(in). The catalysed reaction is L-asparagine(out) + L-glutamine(in) + Na(+)(out) = L-asparagine(in) + L-glutamine(out) + Na(+)(in). The enzyme catalyses L-glutamine(in) + L-alanine(out) + Na(+)(out) = L-glutamine(out) + L-alanine(in) + Na(+)(in). It catalyses the reaction L-valine(out) + L-glutamine(in) + Na(+)(out) = L-valine(in) + L-glutamine(out) + Na(+)(in). It carries out the reaction L-glutamine(in) + L-methionine(out) + Na(+)(out) = L-glutamine(out) + L-methionine(in) + Na(+)(in). The catalysed reaction is L-glutamine(in) + L-glutamate(out) + Na(+)(out) + H(+)(out) = L-glutamine(out) + L-glutamate(in) + Na(+)(in) + H(+)(in). The enzyme catalyses D-serine(in) + L-glutamine(out) + Na(+)(out) = D-serine(out) + L-glutamine(in) + Na(+)(in). It catalyses the reaction D-serine(in) + L-alanine(out) + Na(+)(out) = D-serine(out) + L-alanine(in) + Na(+)(in). It carries out the reaction nitrate(in) = nitrate(out). The catalysed reaction is iodide(out) = iodide(in). The enzyme catalyses thiocyanate(in) = thiocyanate(out). With respect to regulation, regulated by L-cysteine, which can either inhibit substrate influx or trigger substrate efflux without being transported itself. Functionally, sodium-coupled antiporter of neutral amino acids. In a tri-substrate transport cycle, exchanges neutral amino acids between the extracellular and intracellular compartments, coupled to the inward cotransport of at least one sodium ion. The preferred substrate is the essential amino acid L-glutamine, a precursor for biosynthesis of proteins, nucleotides and amine sugars as well as an alternative fuel for mitochondrial oxidative phosphorylation. Exchanges L-glutamine with other neutral amino acids such as L-serine, L-threonine and L-asparagine in a bidirectional way. Provides L-glutamine to proliferating stem and activated cells driving the metabolic switch toward cell differentiation. The transport cycle is usually pH-independent, with the exception of L-glutamate. Transports extracellular L-glutamate coupled to the cotransport of one proton and one sodium ion in exchange for intracellular L-glutamine counter-ion. May provide for L-glutamate uptake in glial cells regulating glutamine/glutamate cycle in the nervous system. Can transport D-amino acids. Mediates D-serine release from the retinal glia potentially affecting NMDA receptor function in retinal neurons. Displays sodium- and amino acid-dependent but uncoupled channel-like anion conductance with a preference SCN(-) &gt;&gt; NO3(-) &gt; I(-) &gt; Cl(-). Through binding of the fusogenic protein syncytin-1/ERVW-1 may mediate trophoblasts syncytialization, the spontaneous fusion of their plasma membranes, an essential process in placental development. Its function is as follows. (Microbial infection) Acts as a cell surface receptor for Feline endogenous virus RD114. (Microbial infection) Acts as a cell surface receptor for Baboon M7 endogenous virus. In terms of biological role, (Microbial infection) Acts as a cell surface receptor for type D simian retroviruses. This Homo sapiens (Human) protein is Neutral amino acid transporter B(0).